The primary structure comprises 359 residues: 4-galactosyl-N-acetylglucosaminide 3-alpha-L-fucosyltransferase 9 (359 aa).

Residues 1-11 (MTSTSKGILRP) are Cytoplasmic-facing. Residues 12–32 (FLIVCIILGCFVACLLIYIKP) form a helical; Signal-anchor for type II membrane protein membrane-spanning segment. At 33–359 (TNSWVFSPME…VGNLEKWFWN (327 aa)) the chain is on the lumenal side. A glycan (N-linked (GlcNAc...) asparagine) is linked at Asn-62. Residues 63–168 (ETTILVWVWP…RRDSDIQVPY (106 aa)) are acceptor-binding. Gln-75 serves as a coordination point for a beta-D-galactosyl-(1-&gt;4)-N-acetyl-beta-D-glucosaminyl derivative. Intrachain disulfides connect Cys-82-Cys-335, Cys-91-Cys-338, and Cys-190-Cys-238. Residue Asn-101 is glycosylated (N-linked (GlcNAc...) asparagine). Glu-137 is a binding site for a beta-D-galactosyl-(1-&gt;4)-N-acetyl-beta-D-glucosaminyl derivative. Glu-137 (nucleophile) is an active-site residue. Residue Glu-137 participates in GDP-beta-L-fucose binding. N-linked (GlcNAc...) asparagine glycosylation is present at Asn-153. Residues Tyr-168, Val-192, Ser-194, Asn-195, Arg-202, Val-226, Tyr-241, Asn-246, Tyr-252, Glu-255, and Lys-256 each contribute to the GDP-beta-L-fucose site. Residues 169–326 (GFLTVSTSPF…NWRKDFTVNL (158 aa)) are donor-binding. An acceptor-binding region spans residues 327–359 (PRFWESHACLACDHVKRHQEYKSVGNLEKWFWN).

It belongs to the glycosyltransferase 10 family. Homodimer. Post-translationally, N-glycosylated with complex-type N-glycans.

The protein resides in the golgi apparatus. It is found in the trans-Golgi network membrane. The protein localises to the golgi apparatus membrane. It carries out the reaction a beta-D-galactosyl-(1-&gt;4)-N-acetyl-beta-D-glucosaminyl derivative + GDP-beta-L-fucose = a beta-D-galactosyl-(1-&gt;4)-[alpha-L-fucosyl-(1-&gt;3)]-N-acetyl-beta-D-glucosaminyl derivative + GDP + H(+). The enzyme catalyses an alpha-Neu5Ac-(2-&gt;3)-beta-D-Gal-(1-&gt;4)-beta-D-GlcNAc-(1-&gt;3)-beta-D-Gal-(1-&gt;4)-beta-D-GlcNAc derivative + GDP-beta-L-fucose = an alpha-Neu5Ac-(2-&gt;3)-beta-D-Gal-(1-&gt;4)-beta-D-GlcNAc-(1-&gt;3)-beta-D-Gal-(1-&gt;4)-[alpha-L-Fuc-(1-&gt;3)]-beta-D-GlcNAc derivative + GDP + H(+). The catalysed reaction is alpha-N-glycoloylneuraminosyl-(2-&gt;3)-beta-D-galactosyl-(1-&gt;4)-N-acetyl-beta-D-glucosaminyl-(1-&gt;3)-beta-D-galactosyl-(1-&gt;4)-N-acetyl-beta-D-glucosaminyl-(1-&gt;3)-beta-D-galactosyl-(1-&gt;4)-beta-D-glucosyl-(1&lt;-&gt;1')-ceramide + GDP-beta-L-fucose = alpha-N-glycoloylneuraminosyl-(2-&gt;3)-beta-D-galactosyl-(1-&gt;4)-N-acetyl-beta-D-glucosaminyl-(1-&gt;3)-beta-D-galactosyl-(1-&gt;4)-[alpha-L-fucosyl-(1-&gt;3)]-N-acetyl-beta-D-glucosaminyl-(1-&gt;3)-beta-D-galactosyl-(1-&gt;4)-beta-D-glucosyl-(1&lt;-&gt;1')-ceramide + GDP + H(+). It catalyses the reaction alpha-D-galactosyl-(1-&gt;3)-beta-D-galactosyl-(1-&gt;4)-N-acetyl-beta-D-glucosaminyl-(1-&gt;3)-beta-D-galactosyl-(1-&gt;4)-beta-D-glucosyl-(1&lt;-&gt;1')-ceramide + GDP-beta-L-fucose = a neolactoside IV(3)-alpha-Gal,III(3)-alpha-Fuc-nLc4Cer + GDP + H(+). It carries out the reaction a neolactoside nLc4Cer + GDP-beta-L-fucose = a neolactoside III(3)-alpha-Fuc-nLc4Cer + GDP + H(+). The enzyme catalyses an N-acetyl-alpha-neuraminyl-(2-&gt;3)-beta-D-galactosyl-(1-&gt;4)-N-acetyl-beta-D-glucosaminyl derivative + GDP-beta-L-fucose = an alpha-Neu5Ac-(2-&gt;3)-beta-D-Gal-(1-&gt;4)-[alpha-L-Fuc-(1-&gt;3)]-beta-D-GlcNAc derivative + GDP + H(+). The catalysed reaction is beta-D-Gal-(1-&gt;4)-beta-D-GlcNAc-(1-&gt;3)-beta-D-Gal-(1-&gt;4)-D-Glc + GDP-beta-L-fucose = beta-D-Gal-(1-&gt;4)-[alpha-L-Fuc-(1-&gt;3)]-beta-D-GlcNAc-(1-&gt;3)-beta-D-Gal-(1-&gt;4)-D-Glc + GDP + H(+). It catalyses the reaction an alpha-L-Fuc-(1-&gt;2)-beta-D-Gal-(1-&gt;4)-beta-D-GlcNAc derivative + GDP-beta-L-fucose = an alpha-L-Fuc-(1-&gt;2)-beta-D-Gal-(1-&gt;4)-[alpha-L-Fuc-(1-&gt;3)]-beta-D-GlcNAc derivative + GDP + H(+). The protein operates within protein modification; protein glycosylation. Its pathway is glycolipid biosynthesis. Activated by Mn2+. Its function is as follows. Catalyzes alpha(1-&gt;3) linkage of fucosyl moiety transferred from GDP-beta-L-fucose to N-acetyl glucosamine (GlcNAc) within type 2 lactosamine (LacNAc, beta-D-Gal-(1-&gt;4)-beta-D-GlcNAc-) glycan attached to glycolipids and N- or O-linked glycoproteins. Fucosylates distal type 2 LacNAc and its fucosylated (H-type 2 LacNAc) and sialylated (sialyl-type 2 LacNAc) derivatives to form Lewis x (Lex) (CD15) and Lewis y (Ley) antigenic epitopes involved in cell adhesion and differentiation. Generates Lex epitopes in the brain, presumably playing a role in the maintenance of neuronal stemness and neurite outgrowth in progenitor neural cells. Fucosylates the internal type 2 LacNAc unit of the polylactosamine chain to form VIM-2 antigen that serves as recognition epitope for SELE. Can also modify milk oligosaccharides in particular type 2 tetrasaccharide LNnT. The chain is 4-galactosyl-N-acetylglucosaminide 3-alpha-L-fucosyltransferase 9 from Rattus norvegicus (Rat).